Here is a 218-residue protein sequence, read N- to C-terminus: Ras-related protein Rab-42 (218 aa).

Residues Ala-19, Gly-21, Lys-22, Thr-23, and Thr-46 each contribute to the GTP site. Positions 23, 46, and 70 each coordinate Mg(2+). Positions 73, 130, 132, 160, and 161 each coordinate GTP. S-geranylgeranyl cysteine attachment occurs at residues Cys-216 and Cys-218.

The protein belongs to the small GTPase superfamily. Rab family. Requires Mg(2+) as cofactor.

The protein resides in the membrane. It catalyses the reaction GTP + H2O = GDP + phosphate + H(+). Regulated by guanine nucleotide exchange factors (GEFs) which promote the exchange of bound GDP for free GTP. Regulated by GTPase activating proteins (GAPs) which increase the GTP hydrolysis activity. Inhibited by GDP dissociation inhibitors (GDIs). Its function is as follows. The small GTPases Rab are key regulators of intracellular membrane trafficking, from the formation of transport vesicles to their fusion with membranes. Rabs cycle between an inactive GDP-bound form and an active GTP-bound form that is able to recruit to membranes different sets of downstream effectors directly responsible for vesicle formation, movement, tethering and fusion. The physiological function of RAB42 remains undefined. The protein is Ras-related protein Rab-42 of Homo sapiens (Human).